Here is a 120-residue protein sequence, read N- to C-terminus: Large ribosomal subunit protein uL22 (120 aa).

This sequence belongs to the universal ribosomal protein uL22 family. As to quaternary structure, part of the 50S ribosomal subunit.

This protein binds specifically to 23S rRNA; its binding is stimulated by other ribosomal proteins, e.g. L4, L17, and L20. It is important during the early stages of 50S assembly. It makes multiple contacts with different domains of the 23S rRNA in the assembled 50S subunit and ribosome. Its function is as follows. The globular domain of the protein is located near the polypeptide exit tunnel on the outside of the subunit, while an extended beta-hairpin is found that lines the wall of the exit tunnel in the center of the 70S ribosome. This is Large ribosomal subunit protein uL22 from Borreliella afzelii (strain PKo) (Borrelia afzelii).